Reading from the N-terminus, the 76-residue chain is Sec-independent protein translocase protein TatA (76 aa).

A helical membrane pass occupies residues 1–21 (MLGGLTGWHLLIILAVILLLF). Over residues 44–57 (VNEMKKDGDKDKGE) the composition is skewed to basic and acidic residues. The tract at residues 44–76 (VNEMKKDGDKDKGEGGSTAPATDTGASSEQNSK) is disordered. Positions 62–76 (APATDTGASSEQNSK) are enriched in polar residues.

Belongs to the TatA/E family. In terms of assembly, the Tat system comprises two distinct complexes: a TatABC complex, containing multiple copies of TatA, TatB and TatC subunits, and a separate TatA complex, containing only TatA subunits. Substrates initially bind to the TatABC complex, which probably triggers association of the separate TatA complex to form the active translocon.

Its subcellular location is the cell membrane. Functionally, part of the twin-arginine translocation (Tat) system that transports large folded proteins containing a characteristic twin-arginine motif in their signal peptide across membranes. TatA could form the protein-conducting channel of the Tat system. This chain is Sec-independent protein translocase protein TatA, found in Leifsonia xyli subsp. xyli (strain CTCB07).